The sequence spans 222 residues: Translation initiation factor 6 (222 aa).

It belongs to the eIF-6 family.

Binds to the 50S ribosomal subunit and prevents its association with the 30S ribosomal subunit to form the 70S initiation complex. The chain is Translation initiation factor 6 from Methanothermobacter thermautotrophicus (strain ATCC 29096 / DSM 1053 / JCM 10044 / NBRC 100330 / Delta H) (Methanobacterium thermoautotrophicum).